A 280-amino-acid chain; its full sequence is Homeobox protein Hox-B1b (280 aa).

Residues 46–65 (GRLAAPTSAPHQSPGLPLHH) form a disordered region. The Antp-type hexapeptide motif lies at 170–175 (TFDWMK). Residues 195 to 254 (HNVIRTNFTTKQLTELEKEFHFNKYLTRARRVEVAASLELNETQVKIWFQNRRMKQKKRE) constitute a DNA-binding region (homeobox). A disordered region spans residues 249-280 (KQKKREKLGGVLVHREKASGPESSPKAKESEP). Basic and acidic residues predominate over residues 261–280 (VHREKASGPESSPKAKESEP).

Belongs to the Antp homeobox family. Labial subfamily.

The protein resides in the nucleus. Functionally, sequence-specific transcription factor which is part of a developmental regulatory system that provides cells with specific positional identities on the anterior-posterior axis. This is Homeobox protein Hox-B1b (hoxb1b) from Takifugu rubripes (Japanese pufferfish).